The following is a 100-amino-acid chain: Small ribosomal subunit protein uS14c (100 aa).

Belongs to the universal ribosomal protein uS14 family. Part of the 30S ribosomal subunit.

It localises to the plastid. The protein resides in the chloroplast. Functionally, binds 16S rRNA, required for the assembly of 30S particles. This chain is Small ribosomal subunit protein uS14c, found in Aethionema grandiflorum (Persian stone-cress).